Reading from the N-terminus, the 179-residue chain is ATP-dependent protease subunit HslV (179 aa).

T7 is a catalytic residue. Na(+) is bound by residues G162, C165, and T168.

Belongs to the peptidase T1B family. HslV subfamily. As to quaternary structure, a double ring-shaped homohexamer of HslV is capped on each side by a ring-shaped HslU homohexamer. The assembly of the HslU/HslV complex is dependent on binding of ATP.

The protein localises to the cytoplasm. The enzyme catalyses ATP-dependent cleavage of peptide bonds with broad specificity.. Allosterically activated by HslU binding. Functionally, protease subunit of a proteasome-like degradation complex believed to be a general protein degrading machinery. This is ATP-dependent protease subunit HslV from Bordetella pertussis (strain Tohama I / ATCC BAA-589 / NCTC 13251).